We begin with the raw amino-acid sequence, 341 residues long: Follistatin (341 aa).

The N-terminal stretch at 1–29 (MLNERIQPGMIFLLTVSLCHFMEYRAVQA) is a signal peptide. One can recognise a TB domain in the interval 30–103 (GNCWLQQSKN…TCENVDCGPG (74 aa)). 8 cysteine pairs are disulfide-bonded: Cys-32–Cys-55, Cys-42–Cys-88, Cys-56–Cys-91, Cys-95–Cys-106, Cys-100–Cys-116, Cys-118–Cys-150, Cys-122–Cys-143, and Cys-132–Cys-164. An N-linked (GlcNAc...) asparagine glycan is attached at Asn-72. The region spanning 94-117 (TCENVDCGPGKKCKMNKKNKPRCV) is the Follistatin-like 1 domain. 3 consecutive Kazal-like domains span residues 100–166 (CGPG…KCKK), 186–241 (NAYC…KCIK), and 264–318 (RGRC…SCNS). Asn-124 is a glycosylation site (N-linked (GlcNAc...) asparagine). One can recognise a Follistatin-like 2 domain in the interval 167 to 190 (TCRDVLCPGSSSCVVDQTNNAYCV). 3 cysteine pairs are disulfide-bonded: Cys-192/Cys-225, Cys-196/Cys-218, and Cys-207/Cys-239. In terms of domain architecture, Follistatin-like 3 spans 244-268 (SCEDIQCSAGKKCLWDSRVGRGRCA). Cystine bridges form between Cys-270–Cys-302, Cys-274–Cys-295, and Cys-284–Cys-316. Residue Asn-288 is glycosylated (N-linked (GlcNAc...) asparagine). A compositionally biased stretch (acidic residues) spans 321–333 (EDTEEEEEEEEPD). Residues 321-341 (EDTEEEEEEEEPDYSFVISSW) are disordered.

In terms of assembly, monomer. Spemann organizer and notochord.

Its subcellular location is the secreted. In terms of biological role, binds directly to activin and functions as an activin antagonist which plays a role in neural induction. The short isoform is a more potent inhibitor of activin than the long isoform. Specific inhibitor of the biosynthesis and secretion of pituitary follicle stimulating hormone (FSH). The chain is Follistatin (fst) from Xenopus laevis (African clawed frog).